A 365-amino-acid polypeptide reads, in one-letter code: Ribosomal RNA large subunit methyltransferase M (365 aa).

S-adenosyl-L-methionine is bound by residues serine 187, 220–223, aspartate 239, aspartate 259, and aspartate 276; that span reads CPGG. Lysine 305 (proton acceptor) is an active-site residue.

This sequence belongs to the class I-like SAM-binding methyltransferase superfamily. RNA methyltransferase RlmE family. RlmM subfamily. As to quaternary structure, monomer.

Its subcellular location is the cytoplasm. It catalyses the reaction cytidine(2498) in 23S rRNA + S-adenosyl-L-methionine = 2'-O-methylcytidine(2498) in 23S rRNA + S-adenosyl-L-homocysteine + H(+). In terms of biological role, catalyzes the 2'-O-methylation at nucleotide C2498 in 23S rRNA. This chain is Ribosomal RNA large subunit methyltransferase M, found in Psychromonas ingrahamii (strain DSM 17664 / CCUG 51855 / 37).